The following is a 382-amino-acid chain: Galactokinase (382 aa).

34–37 (EHTD) serves as a coordination point for substrate. An ATP-binding site is contributed by 124-130 (GAGLSSS). Mg(2+) contacts are provided by Ser130 and Glu162. Asp174 serves as the catalytic Proton acceptor. Tyr223 contacts substrate.

It belongs to the GHMP kinase family. GalK subfamily.

The protein localises to the cytoplasm. It carries out the reaction alpha-D-galactose + ATP = alpha-D-galactose 1-phosphate + ADP + H(+). The protein operates within carbohydrate metabolism; galactose metabolism. Functionally, catalyzes the transfer of the gamma-phosphate of ATP to D-galactose to form alpha-D-galactose-1-phosphate (Gal-1-P). The polypeptide is Galactokinase (Salmonella heidelberg (strain SL476)).